The following is a 378-amino-acid chain: Chaperone protein DnaJ (378 aa).

Residues Asp5–Gly70 enclose the J domain. A CR-type zinc finger spans residues Gly137–Ser215. The Zn(2+) site is built by Cys150, Cys153, Cys167, Cys170, Cys189, Cys192, Cys203, and Cys206. 4 CXXCXGXG motif repeats span residues Cys150–Gly157, Cys167–Gly174, Cys189–Gly196, and Cys203–Gly210.

It belongs to the DnaJ family. As to quaternary structure, homodimer. Zn(2+) is required as a cofactor.

The protein localises to the cytoplasm. Participates actively in the response to hyperosmotic and heat shock by preventing the aggregation of stress-denatured proteins and by disaggregating proteins, also in an autonomous, DnaK-independent fashion. Unfolded proteins bind initially to DnaJ; upon interaction with the DnaJ-bound protein, DnaK hydrolyzes its bound ATP, resulting in the formation of a stable complex. GrpE releases ADP from DnaK; ATP binding to DnaK triggers the release of the substrate protein, thus completing the reaction cycle. Several rounds of ATP-dependent interactions between DnaJ, DnaK and GrpE are required for fully efficient folding. Also involved, together with DnaK and GrpE, in the DNA replication of plasmids through activation of initiation proteins. This Psychrobacter cryohalolentis (strain ATCC BAA-1226 / DSM 17306 / VKM B-2378 / K5) protein is Chaperone protein DnaJ.